The following is a 434-amino-acid chain: [Arg8]-vasotocin receptor (434 aa).

Topologically, residues 1 to 27 (MGRIANQTTASNDTDPFGRNEEVAKME) are extracellular. 2 N-linked (GlcNAc...) asparagine glycosylation sites follow: N6 and N12. A helical transmembrane segment spans residues 28–48 (ITVLSVTFFVAVIGNLSVLLA). Over 49–67 (MHNTKKKSSRMHLFIKHLS) the chain is Cytoplasmic. The chain crosses the membrane as a helical span at residues 68 to 88 (LADMVVAFFQVLPQLCWEITF). Topologically, residues 89–98 (RFYGPDFLCR) are extracellular. A disulfide bond links C97 and C176. A helical transmembrane segment spans residues 99-119 (IVKHLQVLGMFASTYMMVMMT). Residues 120-141 (LDRYIAICHPLKTLQQPTQRAY) lie on the Cytoplasmic side of the membrane. A helical membrane pass occupies residues 142–162 (IMIGSTWLCSLLLSTPQYFIF). Over 163 to 191 (SLSEIQNGSYVYDCWGHFIEPWGIRAYIT) the chain is Extracellular. The chain crosses the membrane as a helical span at residues 192-212 (WITVGIFLIPVIILMICYGFI). Residues 213–257 (CHSIWKNIKCKTMRGTRNTKDGMIGKVSVSSVTIISRAKLRTVKM) are Cytoplasmic-facing. The chain crosses the membrane as a helical span at residues 258 to 278 (TLVIVLAYIVCWAPFFIVQMW). The Extracellular segment spans residues 279–295 (SVWDENFSWDDSENAAV). Residues 296-316 (TLSALLASLNSCCNPWIYMLF) form a helical membrane-spanning segment. The Cytoplasmic segment spans residues 317 to 434 (SGHLLYDFLR…KSSQCMSKES (118 aa)).

This sequence belongs to the G-protein coupled receptor 1 family. Vasopressin/oxytocin receptor subfamily. As to expression, expressed in pituitary, liver, gills, swim bladder and lateral line.

The protein resides in the cell membrane. Its function is as follows. Binds to vasotocin. Produces an induction of membrane chloride currents indicating that it is coupled to the inositol phosphate/calcium pathway. The protein is [Arg8]-vasotocin receptor of Catostomus commersonii (White sucker).